The sequence spans 93 residues: uncharacterized protein (93 aa).

A run of 2 helical transmembrane segments spans residues 7–27 (LIFLGIILMFIGFFMITLGMI) and 70–90 (ILSVLIAILMIIWMFLFAFGI).

It is found in the cell membrane. This is an uncharacterized protein from Methanocaldococcus jannaschii (strain ATCC 43067 / DSM 2661 / JAL-1 / JCM 10045 / NBRC 100440) (Methanococcus jannaschii).